Consider the following 146-residue polypeptide: Hemoglobin subunit beta (146 aa).

Val1 is modified (N-acetylvaline). The Globin domain occupies 2 to 146 (HLTPDEKNAV…VANALAHKYH (145 aa)). The residue at position 12 (Thr12) is a Phosphothreonine. Ser44 is modified (phosphoserine). Lys59 is modified (N6-acetyllysine). Residue His63 coordinates heme b. Lys82 carries the post-translational modification N6-acetyllysine. His92 serves as a coordination point for heme b. Position 93 is an S-nitrosocysteine (Cys93). Lys144 carries the N6-acetyllysine modification.

The protein belongs to the globin family. Heterotetramer of two alpha chains and two beta chains. As to expression, red blood cells.

Functionally, involved in oxygen transport from the lung to the various peripheral tissues. The protein is Hemoglobin subunit beta (HBB) of Piliocolobus badius (Western red colobus).